Consider the following 268-residue polypeptide: Tryptophan synthase alpha chain (268 aa).

Active-site proton acceptor residues include E49 and D60.

Belongs to the TrpA family. In terms of assembly, tetramer of two alpha and two beta chains.

The enzyme catalyses (1S,2R)-1-C-(indol-3-yl)glycerol 3-phosphate + L-serine = D-glyceraldehyde 3-phosphate + L-tryptophan + H2O. It functions in the pathway amino-acid biosynthesis; L-tryptophan biosynthesis; L-tryptophan from chorismate: step 5/5. Its function is as follows. The alpha subunit is responsible for the aldol cleavage of indoleglycerol phosphate to indole and glyceraldehyde 3-phosphate. This chain is Tryptophan synthase alpha chain, found in Serratia proteamaculans (strain 568).